Here is a 188-residue protein sequence, read N- to C-terminus: Large ribosomal subunit protein eL18 (188 aa).

A Glycyl lysine isopeptide (Lys-Gly) (interchain with G-Cter in SUMO2) cross-link involves residue Lys-119. Ser-130 is modified (phosphoserine). The tract at residues 150–188 (RHFGKAPGTPHSHTKPYVRSKGRKFERARGRRASRGYKN) is disordered. The residue at position 158 (Thr-158) is a Phosphothreonine. Basic residues-rich tracts occupy residues 161 to 171 (SHTKPYVRSKG) and 178 to 188 (RGRRASRGYKN). Lys-164 participates in a covalent cross-link: Glycyl lysine isopeptide (Lys-Gly) (interchain with G-Cter in SUMO2).

This sequence belongs to the eukaryotic ribosomal protein eL18 family. Component of the large ribosomal subunit.

Its subcellular location is the cytoplasm. It localises to the cytosol. The protein resides in the rough endoplasmic reticulum. Functionally, component of the large ribosomal subunit. The ribosome is a large ribonucleoprotein complex responsible for the synthesis of proteins in the cell. The chain is Large ribosomal subunit protein eL18 (Rpl18) from Rattus norvegicus (Rat).